The primary structure comprises 240 residues: Glutamine transport ATP-binding protein GlnQ (240 aa).

The 235-residue stretch at 2–236 (IEFKNVSKHF…PPSQRLQEFL (235 aa)) folds into the ABC transporter domain. An ATP-binding site is contributed by 34-41 (GPSGSGKS).

This sequence belongs to the ABC transporter superfamily. In terms of assembly, heterotetramer with 2 subunits of GlnQ and 2 subunits of GlnP.

The protein localises to the cell inner membrane. Its function is as follows. Part of the binding-protein-dependent transport system for glutamine. Probably responsible for energy coupling to the transport system. The chain is Glutamine transport ATP-binding protein GlnQ (glnQ) from Escherichia coli (strain K12).